We begin with the raw amino-acid sequence, 76 residues long: U14-hexatoxin-Hi1a (76 aa).

The first 18 residues, 1-18 (MMQLAVLICLSLVVNTFA), serve as a signal peptide directing secretion. Disulfide bonds link Cys21–Cys34, Cys27–Cys39, and Cys33–Cys61.

In terms of tissue distribution, expressed by the venom gland.

Its subcellular location is the secreted. In terms of biological role, probable ion channel inhibitor. In Hadronyche infensa (Fraser island funnel-web spider), this protein is U14-hexatoxin-Hi1a.